We begin with the raw amino-acid sequence, 515 residues long: G-protein coupled receptor 176 (515 aa).

The span at 1–16 (MGHNGSWISPNASEPH) shows a compositional bias: polar residues. The tract at residues 1 to 20 (MGHNGSWISPNASEPHNASG) is disordered. The Extracellular segment spans residues 1 to 42 (MGHNGSWISPNASEPHNASGAEAAGVNRSALGEFGEAQLYRQ). N-linked (GlcNAc...) asparagine glycans are attached at residues Asn4, Asn11, Asn17, and Asn27. The chain crosses the membrane as a helical span at residues 43–63 (FTTTVQVVIFIGSLLGNFMVL). Topologically, residues 64–82 (WSTCRTTVFKSVTNRFIKN) are cytoplasmic. The helical transmembrane segment at 83-103 (LACSGICASLVCVPFDIILST) threads the bilayer. At 104-118 (SPHCCWWIYTMLFCK) the chain is on the extracellular side. A helical transmembrane segment spans residues 119–139 (VVKFLHKVFCSVTILSFPAIA). At 140-160 (LDRYYSVLYPLERKISDAKSR) the chain is on the cytoplasmic side. Residues 161–181 (ELVMYIWAHAVVASVPVFAVT) form a helical membrane-spanning segment. Residues 182-207 (NVADIYATSTCTEVWSNSLGHLVYVL) lie on the Extracellular side of the membrane. A helical transmembrane segment spans residues 208–228 (VYNITTVIVPVVVVFLFLILI). Residues 229 to 267 (RRALSASQKKKVIIAALRTPQNTISIPYASQREAELHAT) lie on the Cytoplasmic side of the membrane. Residues 268–288 (LLSMVMVFILCSVPYATLVVY) traverse the membrane as a helical segment. Residues 289 to 299 (QTVLNVPDTSV) lie on the Extracellular side of the membrane. The helical transmembrane segment at 300–320 (FLLLTAVWLPKVSLLANPVLF) threads the bilayer. At 321-515 (LTVNKSVRKC…KVSIFPKVDS (195 aa)) the chain is on the cytoplasmic side.

This sequence belongs to the G-protein coupled receptor 1 family.

The protein localises to the cell membrane. Orphan receptor involved in normal circadian rhythm behavior. Acts through the G-protein subclass G(z)-alpha and has an agonist-independent basal activity to repress cAMP production. The chain is G-protein coupled receptor 176 (GPR176) from Homo sapiens (Human).